The chain runs to 280 residues: Rhomboid-like protein 11, chloroplastic (280 aa).

The transit peptide at 1-57 (MSQLLHLHRLSLPQSSLRFRFPPLHRRRAASSPTNSTQPPLQFRPLTVSRSQITCRF) directs the protein to the chloroplast. Residues 58–82 (SQSDITPQFELDKAKDNRKPQKRAN) are Stromal-facing. A helical membrane pass occupies residues 83–103 (GIFWIILINLGIYLADHFFQV). Residues 104–117 (RGIKSLYLYHNFPA) lie on the Chloroplast intermembrane side of the membrane. The chain crosses the membrane as a helical span at residues 118–140 (WYQFVTATFCHANWNHLSSNLFF). At 141–154 (LYIFGKLVEEEEGN) the chain is on the stromal side. The chain crosses the membrane as a helical span at residues 155–175 (FGLWLSYLFTGVGANLVSWLV). Over 176–178 (LPR) the chain is Chloroplast intermembrane. The chain crosses the membrane as a helical span at residues 179–199 (NAVSVGASGAVFGLFAISVLV). Residue Ser186 is the Nucleophile of the active site. The Stromal segment spans residues 200–243 (KMSWDWRKILEVLILGQFVIERVMEAAQASAGLSGTIYGGYSLQ). The helical transmembrane segment at 244–264 (TVNHIAHLSGALVGVVLVWLL) threads the bilayer. His250 acts as the Charge relay system in catalysis. At 265-280 (SKFPSASMDQDVKKSS) the chain is on the chloroplast intermembrane side.

The protein belongs to the peptidase S54 family. As to quaternary structure, homooligomer.

The protein resides in the plastid. The protein localises to the chloroplast inner membrane. Functionally, rhomboid-type serine protease that catalyzes intramembrane proteolysis. May be involved in TIC22 processing during its import. The protein is Rhomboid-like protein 11, chloroplastic of Arabidopsis thaliana (Mouse-ear cress).